Reading from the N-terminus, the 207-residue chain is Large ribosomal subunit protein bL25 (207 aa).

This sequence belongs to the bacterial ribosomal protein bL25 family. CTC subfamily. As to quaternary structure, part of the 50S ribosomal subunit; part of the 5S rRNA/L5/L18/L25 subcomplex. Contacts the 5S rRNA. Binds to the 5S rRNA independently of L5 and L18.

Functionally, this is one of the proteins that binds to the 5S RNA in the ribosome where it forms part of the central protuberance. In Dictyoglomus thermophilum (strain ATCC 35947 / DSM 3960 / H-6-12), this protein is Large ribosomal subunit protein bL25.